We begin with the raw amino-acid sequence, 170 residues long: MNGFSHFNEEGRARMVDISDKSSTVRTAAAISSVHMKHDVYSRIKNREIGKGDVLAVAQVAGIMAAKQTSAIIPMCHPLSLSSVDISFGWEEKDSEAVLHIQASVKTKGSTGVEMEALTSASVCALTVYDMCKALDKGMVIGPTCLMEKTGGKNGDFKRDASEYKVEDQS.

Substrate is bound by residues 75 to 77 (MCH) and 115 to 116 (ME). Asp130 is an active-site residue.

It belongs to the MoaC family. In terms of assembly, homohexamer; trimer of dimers.

The enzyme catalyses (8S)-3',8-cyclo-7,8-dihydroguanosine 5'-triphosphate = cyclic pyranopterin phosphate + diphosphate. It functions in the pathway cofactor biosynthesis; molybdopterin biosynthesis. Functionally, catalyzes the conversion of (8S)-3',8-cyclo-7,8-dihydroguanosine 5'-triphosphate to cyclic pyranopterin monophosphate (cPMP). In Bacillus velezensis (strain DSM 23117 / BGSC 10A6 / LMG 26770 / FZB42) (Bacillus amyloliquefaciens subsp. plantarum), this protein is Cyclic pyranopterin monophosphate synthase.